A 782-amino-acid chain; its full sequence is U-box domain-containing protein 7 (782 aa).

A U-box domain is found at Val-271 to Gln-345. ARM repeat units lie at residues Glu-456–Val-499, Asn-502–Asp-541, Glu-542–Thr-581, Ser-583–Ser-623, and Glu-626–Asn-665. Positions Glu-707 to Arg-729 are enriched in basic and acidic residues. Positions Glu-707–Ser-765 are disordered. Residues His-739–Val-748 show a composition bias toward polar residues.

It catalyses the reaction S-ubiquitinyl-[E2 ubiquitin-conjugating enzyme]-L-cysteine + [acceptor protein]-L-lysine = [E2 ubiquitin-conjugating enzyme]-L-cysteine + N(6)-ubiquitinyl-[acceptor protein]-L-lysine.. Its pathway is protein modification; protein ubiquitination. In terms of biological role, functions as an E3 ubiquitin ligase. This is U-box domain-containing protein 7 (PUB7) from Arabidopsis thaliana (Mouse-ear cress).